A 208-amino-acid chain; its full sequence is Frataxin, mitochondrial (208 aa).

The transit peptide at 1–40 (MWTFGRRAAAGLLPRTASRASAWVRNPRGRERIGTCGRRG) directs the protein to the mitochondrion.

It belongs to the frataxin family. As to quaternary structure, component of the mitochondrial core iron-sulfur cluster (ISC) complex composed of NFS1, LYRM4, NDUFAB1, ISCU, FXN, and FDX2; this complex is a heterohexamer containing two copies of each monomer. Homodimer. Monomer (probable predominant form). Oligomer. Monomers and polymeric aggregates of &gt;1 MDa have been isolated from mitochondria. A small fraction of heterologous overexpressed recombinant frataxin forms high-molecular weight aggregates that incorporate iron. Interacts with LYRM4. Interacts (via ferrous form) with ISCU; the interaction is possible when both are bound to the dimeric form of the cysteine desulfurase complex (NFS1:LYRM4) and the interaction enhances FXN interaction to the dimeric form of the cysteine desulfurase complex (NFS1:LYRM4). Interacts with FECH; one iron-bound FXN monomer seems to interact with a FECH homodimer. Interacts with SDHA and SDHB. Interacts with ACO2; the interaction is dependent on citrate. Interacts with HSPA9. In terms of assembly, interacts with ACO1. Interacts with ISCU (cytoplasmic form). Processed in two steps by mitochondrial processing peptidase (MPP). MPP first cleaves the precursor to intermediate form and subsequently converts the intermediate to yield frataxin mature form (frataxin(81-210)) which is the predominant form. The additional forms, frataxin(56-210) and frataxin(78-210), seem to be produced when the normal maturation process is impaired; their physiological relevance is unsure.

The protein localises to the mitochondrion. It is found in the cytoplasm. The protein resides in the cytosol. The catalysed reaction is 4 Fe(2+) + O2 + 4 H(+) = 4 Fe(3+) + 2 H2O. In terms of biological role, functions as an activator of persulfide transfer to the scaffoding protein ISCU as component of the core iron-sulfur cluster (ISC) assembly complex and participates to the [2Fe-2S] cluster assembly. Accelerates sulfur transfer from NFS1 persulfide intermediate to ISCU and to small thiols such as L-cysteine and glutathione leading to persulfuration of these thiols and ultimately sulfide release. Binds ferrous ion and is released from FXN upon the addition of both L-cysteine and reduced FDX2 during [2Fe-2S] cluster assembly. The core iron-sulfur cluster (ISC) assembly complex is involved in the de novo synthesis of a [2Fe-2S] cluster, the first step of the mitochondrial iron-sulfur protein biogenesis. This process is initiated by the cysteine desulfurase complex (NFS1:LYRM4:NDUFAB1) that produces persulfide which is delivered on the scaffold protein ISCU in a FXN-dependent manner. Then this complex is stabilized by FDX2 which provides reducing equivalents to accomplish the [2Fe-2S] cluster assembly. Finally, the [2Fe-2S] cluster is transferred from ISCU to chaperone proteins, including HSCB, HSPA9 and GLRX5. May play a role in the protection against iron-catalyzed oxidative stress through its ability to catalyze the oxidation of Fe(2+) to Fe(3+); the oligomeric form but not the monomeric form has in vitro ferroxidase activity. May be able to store large amounts of iron in the form of a ferrihydrite mineral by oligomerization; however, the physiological relevance is unsure as reports are conflicting and the function has only been shown using heterologous overexpression systems. May function as an iron chaperone protein that protects the aconitase [4Fe-4S]2+ cluster from disassembly and promotes enzyme reactivation. May play a role as a high affinity iron binding partner for FECH that is capable of both delivering iron to ferrochelatase and mediating the terminal step in mitochondrial heme biosynthesis. Functionally, modulates the RNA-binding activity of ACO1. May be involved in the cytoplasmic iron-sulfur protein biogenesis. May contribute to oxidative stress resistance and overall cell survival. The protein is Frataxin, mitochondrial of Rattus norvegicus (Rat).